We begin with the raw amino-acid sequence, 185 residues long: dCTP deaminase (185 aa).

Residues 107–112 (KSTYAR), 131–133 (TLE), Gln152, Tyr166, and Gln176 each bind dCTP. The Proton donor/acceptor role is filled by Glu133.

Belongs to the dCTP deaminase family. As to quaternary structure, homotrimer.

The enzyme catalyses dCTP + H2O + H(+) = dUTP + NH4(+). The protein operates within pyrimidine metabolism; dUMP biosynthesis; dUMP from dCTP (dUTP route): step 1/2. Functionally, catalyzes the deamination of dCTP to dUTP. This chain is dCTP deaminase, found in Wolbachia pipientis wMel.